The sequence spans 360 residues: Mannose-1-phosphate guanylyltransferase catalytic subunit beta (360 aa).

Positions 2–222 are substrate-binding domain; it reads KALILVGGYG…QGFWMDIGQP (221 aa). Residue aspartate 110 participates in GDP-alpha-D-mannose binding. Position 110 (aspartate 110) interacts with Mg(2+). Lysine 162 is an active-site residue. Aspartate 218 contacts GDP-alpha-D-mannose. A hexapeptide repeat domain region spans residues 245 to 360; it reads YSGPGIVGNV…ESVPEPRIIM (116 aa).

Belongs to the transferase hexapeptide repeat family. As to quaternary structure, component of the GMPPA-GMPPB mannose-1-phosphate guanylyltransferase complex composed of 4 GMPPA subunits and 8 GMPPB subunits; the complex is organized into three layers, a central layer made up of 2 GMPPA dimers sandwiched between two layers each made up of 2 GMPPB dimers. GMPPB catalytic activity is reduced when part of the complex and binding of GDP-alpha-D-Mannose by GMPPA induces allosteric feedback inhibition of GMPPB. Mg(2+) is required as a cofactor.

The protein localises to the cytoplasm. The catalysed reaction is alpha-D-mannose 1-phosphate + GTP + H(+) = GDP-alpha-D-mannose + diphosphate. The protein operates within nucleotide-sugar biosynthesis; GDP-alpha-D-mannose biosynthesis; GDP-alpha-D-mannose from alpha-D-mannose 1-phosphate (GTP route): step 1/1. Its activity is regulated as follows. Enzyme activity is reduced by incorporation into the GMPPA-GMPPB mannose-1-phosphate guanylyltransferase complex. Allosterically inhibited, when part of the GMPPA-GMPPB complex, by GDP-alpha-D-mannose binding to GMPPA. Functionally, catalytic subunit of the GMPPA-GMPPB mannose-1-phosphate guanylyltransferase complex. Catalyzes the formation of GDP-mannose, an essential precursor of glycan moieties of glycoproteins and glycolipids. Can catalyze the reverse reaction in vitro. Together with GMPPA regulates GDP-alpha-D-mannose levels. In Mus musculus (Mouse), this protein is Mannose-1-phosphate guanylyltransferase catalytic subunit beta.